A 240-amino-acid polypeptide reads, in one-letter code: Uridylate kinase (240 aa).

ATP is bound at residue 12 to 15 (KLSG). UMP is bound at residue Gly-54. Positions 55 and 59 each coordinate ATP. UMP-binding positions include Asp-74 and 135 to 142 (TGNPFFTT). 3 residues coordinate ATP: Thr-162, Tyr-168, and Asp-171.

This sequence belongs to the UMP kinase family. Homohexamer.

It localises to the cytoplasm. It catalyses the reaction UMP + ATP = UDP + ADP. The protein operates within pyrimidine metabolism; CTP biosynthesis via de novo pathway; UDP from UMP (UMPK route): step 1/1. With respect to regulation, inhibited by UTP. In terms of biological role, catalyzes the reversible phosphorylation of UMP to UDP. This Xanthomonas axonopodis pv. citri (strain 306) protein is Uridylate kinase.